A 194-amino-acid polypeptide reads, in one-letter code: dCTP deaminase, dUMP-forming (194 aa).

DCTP is bound by residues 104–109 (RSSLGR), Asp122, 130–132 (TLE), Gln151, Tyr165, Lys172, and Gln176. Glu132 acts as the Proton donor/acceptor in catalysis.

The protein belongs to the dCTP deaminase family. Homotrimer.

It carries out the reaction dCTP + 2 H2O = dUMP + NH4(+) + diphosphate. The protein operates within pyrimidine metabolism; dUMP biosynthesis; dUMP from dCTP: step 1/1. Functionally, bifunctional enzyme that catalyzes both the deamination of dCTP to dUTP and the hydrolysis of dUTP to dUMP without releasing the toxic dUTP intermediate. In Dictyoglomus thermophilum (strain ATCC 35947 / DSM 3960 / H-6-12), this protein is dCTP deaminase, dUMP-forming.